Consider the following 115-residue polypeptide: Large ribosomal subunit protein bL20 (115 aa).

It belongs to the bacterial ribosomal protein bL20 family.

In terms of biological role, binds directly to 23S ribosomal RNA and is necessary for the in vitro assembly process of the 50S ribosomal subunit. It is not involved in the protein synthesizing functions of that subunit. The polypeptide is Large ribosomal subunit protein bL20 (Prochlorococcus marinus (strain SARG / CCMP1375 / SS120)).